A 164-amino-acid chain; its full sequence is UPF0561 protein C2orf68 homolog (164 aa).

2 stretches are compositionally biased toward basic and acidic residues: residues 1-13 (MEVI…ESVK) and 35-49 (IARD…QAKE). Positions 1–98 (MEVIRDGEGE…WNESSSGTEM (98 aa)) are disordered. The segment covering 50 to 64 (KQRRRHTNTPRRPRR) has biased composition (basic residues).

Belongs to the UPF0561 family.

This is UPF0561 protein C2orf68 homolog from Danio rerio (Zebrafish).